The chain runs to 110 residues: HIT-like protein CPn_0488/CP_0266/CPj0488/CpB0508 (110 aa).

The HIT domain occupies 3–110 (VFKQIIDGLI…LGGRPLGAIA (108 aa)). The Histidine triad motif motif lies at 95-99 (HLHIH).

The sequence is that of HIT-like protein CPn_0488/CP_0266/CPj0488/CpB0508 from Chlamydia pneumoniae (Chlamydophila pneumoniae).